A 91-amino-acid polypeptide reads, in one-letter code: Putative regulatory protein Tlet_1629 (91 aa).

The protein belongs to the RemA family.

The polypeptide is Putative regulatory protein Tlet_1629 (Pseudothermotoga lettingae (strain ATCC BAA-301 / DSM 14385 / NBRC 107922 / TMO) (Thermotoga lettingae)).